Here is an 86-residue protein sequence, read N- to C-terminus: Large ribosomal subunit protein bL31B (86 aa).

It belongs to the bacterial ribosomal protein bL31 family. Type B subfamily. As to quaternary structure, part of the 50S ribosomal subunit.

The chain is Large ribosomal subunit protein bL31B from Salmonella agona (strain SL483).